The chain runs to 754 residues: MATAQSNSPRVFCIGTADTKFDELRFLSEHVRSSLNSFSNKSSFKVGVTVVDVSTSWKETNSCADFDFVPSKDVLSCHTLGEETMGTFADIRGLAIAIMSKALETFLSIANDEQNLAGVIGLGGSGGTSLLSSAFRSLPIGIPKVIISTVASGQTESYIGTSDLVLFPSVVDICGINNVSKVVLSNAGAAFAGMVIGRLESSKEHSITNGKFTVGVTMFGVTTPCVNAVKERLVKEGYETLVFHATGVGGRAMEDLVRGGFIQGVLDITTTEVADYVVGGVMACDSSRFDAILEKKIPLVLSVGALDMVNFGPKTTIPPEFQQRKIHEHNEQVSLMRTTVGENKKFAAFIAEKLNKASSSVCVCLPEKGVSALDAPGKDFYDPEATSCLTRELQMLLENNERCQVKVLPYHINDAEFANALVDSFLEISPKSRHVECQPAESKSIQDIQNDNAVLEKYPSCNGKNFSRLNDFPNAKPETLQKRTVILQKLKDQISKGKPIIGAGAGTGISAKFEEAGGVDLIVLYNSGRFRMAGRGSLAGLLPFADANAIVLEMANEVLPVVKEVAVLAGVCATDPFRRMDNFLKQLESVGFCGVQNFPTVGLFDGNFRQNLEETGMGYGLEVEMIAAAHRMGLLTTPYAFCPDEAVAMAEAGADIIVAHMGLTTSGSIGAKTAVSLEESVTCVQAIADATHRIYPDAIVLCHGGPISSPEEAAYVLKRTTGVHGFYGASSMERLPVEQAITATVQQYKSISME.

The segment at 1 to 201 (MATAQSNSPR…AGMVIGRLES (201 aa)) is N-terminal inhibitory domain NN. Residues 18–20 (DTK), Thr-55, Arg-92, and 124–127 (GSGG) contribute to the ATP site. Residues 211 to 431 (KFTVGVTMFG…VDSFLEISPK (221 aa)) form an N-terminal inhibitory domain NC region.

It belongs to the UPF0261 family. In terms of assembly, homodimer. As to quaternary structure, (Microbial infection) Binds, via an ATP bridge, to the tobamoviruses avirulent (Avr) replication proteins (large and small subunits, e.g. tomato mosaic virus (ToMV/TMV) AC P03587, tobacco mild green mosaic virus (TMGMV) AC P18339 and pepper mild mottle virus (PMMoV) AC P89657) to inhibit their function after the translation of tobamoviruses RNA, but before the viral replication complex formation on the membrane surfaces; this interaction is not possible with resistance-breaking strains replication proteins.

Functionally, inhibitor of viral RNA replication which confers resistance to some tobamoviruses including tomato mosaic virus (ToMV) (e.g. isolate L), tobacco mosaic virus (TMV), tobacco mild green mosaic virus (TMGMV) and pepper mild mottle virus (PMMoV), but not to resistance-breaking isolates of ToMV (e.g. LT1, SL-1 and ToMV1-2) and tomato brown rugose fruit virus (ToBRFV). Prevents tobamoviruses RNA replication by affecting the association of tobamoviruses replication proteins (large and small subunits) with host membrane-associated proteins (e.g. TOM1, TOM2A and ARL8), thus inhibiting the replication complex formation on the membranes and avoiding viral negative-strand RNA synthesis. Inhibits triphosphatase activity of ToMV replication proteins. The chain is ToMV resistance protein Tm-1(GCR237) from Solanum lycopersicum (Tomato).